Reading from the N-terminus, the 37-residue chain is Esculentin-2B (37 aa).

Cys31 and Cys37 are joined by a disulfide.

This sequence belongs to the frog skin active peptide (FSAP) family. Esculentin subfamily. Expressed by the skin glands.

The protein localises to the secreted. Shows antibacterial activity against representative Gram-negative and Gram-positive bacterial species, and hemolytic activity. This Pelophylax lessonae (Pool frog) protein is Esculentin-2B.